A 256-amino-acid polypeptide reads, in one-letter code: Ribosomal RNA large subunit methyltransferase E (256 aa).

The S-adenosyl-L-methionine site is built by glycine 48, tryptophan 50, aspartate 68, aspartate 86, and aspartate 111. The Proton acceptor role is filled by lysine 151. Residues 198 to 256 (PVSPGDELDATVVDIGSEGDGIIKIDGYTLFVPGVENGDSVRVRVTDLKSNVGFAEVIE) enclose the TRAM domain.

Belongs to the class I-like SAM-binding methyltransferase superfamily. RNA methyltransferase RlmE family.

Its subcellular location is the cytoplasm. The catalysed reaction is uridine(2552) in 23S rRNA + S-adenosyl-L-methionine = 2'-O-methyluridine(2552) in 23S rRNA + S-adenosyl-L-homocysteine + H(+). Specifically methylates the uridine in position 2552 of 23S rRNA at the 2'-O position of the ribose in the fully assembled 50S ribosomal subunit. This is Ribosomal RNA large subunit methyltransferase E from Haloquadratum walsbyi (strain DSM 16790 / HBSQ001).